Here is a 981-residue protein sequence, read N- to C-terminus: Ubiquitin carboxyl-terminal hydrolase 15 (981 aa).

A2 carries the post-translational modification N-acetylalanine. Residues 2-223 are mediates interaction with SART3; sequence AEGGAADLDT…KNEDGTWPRG (222 aa). The DUSP domain maps to 7–118; sequence ADLDTQRSDI…GQEPIARKVV (112 aa). Residues 216 to 237 are disordered; the sequence is EDGTWPRGPSTPKSPGASNFST. Residue T226 is modified to Phosphothreonine. Positions 226 to 237 are enriched in polar residues; that stretch reads TPKSPGASNFST. Phosphoserine is present on residues S229 and S242. The USP domain maps to 289 to 933; that stretch reads CGLSNLGNTC…AAYVLFYQRQ (645 aa). C298 (nucleophile) is an active-site residue. T602 carries the post-translational modification Phosphothreonine. The disordered stretch occupies residues 633–694; sequence CCEDQNINGN…GGDNDSENGL (62 aa). Over residues 656–673 the composition is skewed to acidic residues; sequence METDEPDDESSQDQELPS. H891 acts as the Proton acceptor in catalysis. Residues 952 to 981 are disordered; sequence SAATGIPLESDEDSNDNDNDLENENCMHTN. Residues 960 to 974 are compositionally biased toward acidic residues; sequence ESDEDSNDNDNDLEN. Residues S961 and S965 each carry the phosphoserine modification.

Belongs to the peptidase C19 family. As to quaternary structure, a homodimer structure has been reported; however it is unclear whether the protein form a homodimer in vivo. Identified in a complex with the COP9 signalosome complex (CSN). Interacts with SMAD1, SMAD2 and SMAD3; the interaction is direct. Forms a complex with SMURF2 and SMAD7. Interacts with TGFBR1. Interacts with SART3; the interaction is direct. May interact with RNF20 and RNF40. May interact with PRKN. Interacts with INCA1. Phosphorylated. Phosphorylation protects against ubiquitination and subsequent degradation by the proteasome. In terms of processing, ubiquitinated, leading to degradation by the proteasome. In terms of tissue distribution, widely expressed with highest levels in the brain and spleen, and lowest levels in the muscles (at protein level). In the midbrain, strong expression in neurons including the dopaminergic neurons (at protein level). Widely expressed with highest levels in testis, heart and liver.

Its subcellular location is the cytoplasm. It is found in the nucleus. The protein resides in the mitochondrion. The enzyme catalyses Thiol-dependent hydrolysis of ester, thioester, amide, peptide and isopeptide bonds formed by the C-terminal Gly of ubiquitin (a 76-residue protein attached to proteins as an intracellular targeting signal).. Its function is as follows. Hydrolase that removes conjugated ubiquitin from target proteins and regulates various pathways such as the TGF-beta receptor signaling, NF-kappa-B and RNF41/NRDP1-PRKN pathways. Acts as a key regulator of TGF-beta receptor signaling pathway, but the precise mechanism is still unclear: according to a report, acts by promoting deubiquitination of monoubiquitinated R-SMADs (SMAD1, SMAD2 and/or SMAD3), thereby alleviating inhibition of R-SMADs and promoting activation of TGF-beta target genes. According to another reports, regulates the TGF-beta receptor signaling pathway by mediating deubiquitination and stabilization of TGFBR1, leading to an enhanced TGF-beta signal. Able to mediate deubiquitination of monoubiquitinated substrates, 'Lys-27'-, 'Lys-48'- and 'Lys-63'-linked polyubiquitin chains. May also regulate gene expression and/or DNA repair through the deubiquitination of histone H2B. Acts as an inhibitor of mitophagy by counteracting the action of parkin (PRKN): hydrolyzes cleavage of 'Lys-48'- and 'Lys-63'-linked polyubiquitin chains attached by parkin on target proteins such as MFN2, thereby reducing parkin's ability to drive mitophagy. Acts as an associated component of COP9 signalosome complex (CSN) and regulates different pathways via this association: regulates NF-kappa-B by mediating deubiquitination of NFKBIA and deubiquitinates substrates bound to VCP. Involved in endosome organization by mediating deubiquitination of SQSTM1: ubiquitinated SQSTM1 forms a molecular bridge that restrains cognate vesicles in the perinuclear region and its deubiquitination releases target vesicles for fast transport into the cell periphery. Acts as a negative regulator of antifungal immunity by mediating 'Lys-27'-linked deubiquitination of CARD9, thereby inactivating CARD9. The chain is Ubiquitin carboxyl-terminal hydrolase 15 (Usp15) from Mus musculus (Mouse).